We begin with the raw amino-acid sequence, 466 residues long: Glutamate--tRNA ligase (466 aa).

The short motif at 11–21 is the 'HIGH' region element; that stretch reads PSPTGFIHLGN. Positions 243-247 match the 'KMSKS' region motif; that stretch reads KMSKR. Lysine 246 serves as a coordination point for ATP.

It belongs to the class-I aminoacyl-tRNA synthetase family. Glutamate--tRNA ligase type 1 subfamily. As to quaternary structure, monomer.

Its subcellular location is the cytoplasm. The catalysed reaction is tRNA(Glu) + L-glutamate + ATP = L-glutamyl-tRNA(Glu) + AMP + diphosphate. Functionally, catalyzes the attachment of glutamate to tRNA(Glu) in a two-step reaction: glutamate is first activated by ATP to form Glu-AMP and then transferred to the acceptor end of tRNA(Glu). In Cupriavidus necator (strain ATCC 17699 / DSM 428 / KCTC 22496 / NCIMB 10442 / H16 / Stanier 337) (Ralstonia eutropha), this protein is Glutamate--tRNA ligase.